The sequence spans 93 residues: Acylphosphatase (93 aa).

The Acylphosphatase-like domain occupies 7–93 (RAHVFVSGTV…EGIDGFHIRR (87 aa)). Catalysis depends on residues Arg22 and Asn40.

This sequence belongs to the acylphosphatase family.

It catalyses the reaction an acyl phosphate + H2O = a carboxylate + phosphate + H(+). This chain is Acylphosphatase (acyP), found in Haloquadratum walsbyi (strain DSM 16790 / HBSQ001).